The sequence spans 422 residues: 3-phosphoshikimate 1-carboxyvinyltransferase (422 aa).

Lys24, Ser25, and Arg29 together coordinate 3-phosphoshikimate. Lys24 is a binding site for phosphoenolpyruvate. Residues Gly93 and Arg121 each contribute to the phosphoenolpyruvate site. Residues Ser164, Ser165, Gln166, Glu308, and His335 each contribute to the 3-phosphoshikimate site. Residue Gln166 coordinates phosphoenolpyruvate. The active-site Proton acceptor is Glu308. 3 residues coordinate phosphoenolpyruvate: Arg339, Arg380, and Lys405.

It belongs to the EPSP synthase family. As to quaternary structure, monomer.

Its subcellular location is the cytoplasm. It catalyses the reaction 3-phosphoshikimate + phosphoenolpyruvate = 5-O-(1-carboxyvinyl)-3-phosphoshikimate + phosphate. It participates in metabolic intermediate biosynthesis; chorismate biosynthesis; chorismate from D-erythrose 4-phosphate and phosphoenolpyruvate: step 6/7. Its function is as follows. Catalyzes the transfer of the enolpyruvyl moiety of phosphoenolpyruvate (PEP) to the 5-hydroxyl of shikimate-3-phosphate (S3P) to produce enolpyruvyl shikimate-3-phosphate and inorganic phosphate. This is 3-phosphoshikimate 1-carboxyvinyltransferase from Saccharopolyspora erythraea (strain ATCC 11635 / DSM 40517 / JCM 4748 / NBRC 13426 / NCIMB 8594 / NRRL 2338).